The sequence spans 327 residues: MITVGIDHGTSGIKVCIKNNDKTITTYFKMSRTELKNKSFLGELNKYENLRDIDLIAMGYSMGDGINEILPIEKVENRGVINIEGVGEKVGGGTKMYDEIKNSNIPTVVIPGLHKNIECIDARFRALYSHMASPEKISIAYCAYKTYGFNNFILSDISSNTVSLLIKDKKLFGGFDACIGAPGLLHGAIDLEMIRDIDSNKITANEAFSTAGVIKVVIDKYKGVENTKEEILKNYKTDEKCKLAIDTLILSVAMEINSLMFLNPDKNIVLAGSIATTKEYNLVDKLKEYIKGNIYILEGESGALGGALIAEDILNGKKDILGIPVNI.

Belongs to the UPF0285 family.

This chain is UPF0285 protein Maeo_0978, found in Methanococcus aeolicus (strain ATCC BAA-1280 / DSM 17508 / OCM 812 / Nankai-3).